Consider the following 324-residue polypeptide: Holliday junction branch migration complex subunit RuvB (324 aa).

Residues 1–180 (MKSISCGKEY…FGIPLHLEFY (180 aa)) are large ATPase domain (RuvB-L). ATP is bound by residues I19, R20, G61, K64, T65, T66, 127–129 (EDF), R170, Y180, and R217. T65 contacts Mg(2+). The interval 181–251 (SFEELVNIIK…VADSVLLKLG (71 aa)) is small ATPAse domain (RuvB-S). The interval 254 to 324 (KMGLNKLDMN…TDQAKEYLSL (71 aa)) is head domain (RuvB-H). DNA is bound by residues R307 and R312.

The protein belongs to the RuvB family. As to quaternary structure, homohexamer. Forms an RuvA(8)-RuvB(12)-Holliday junction (HJ) complex. HJ DNA is sandwiched between 2 RuvA tetramers; dsDNA enters through RuvA and exits via RuvB. An RuvB hexamer assembles on each DNA strand where it exits the tetramer. Each RuvB hexamer is contacted by two RuvA subunits (via domain III) on 2 adjacent RuvB subunits; this complex drives branch migration. In the full resolvosome a probable DNA-RuvA(4)-RuvB(12)-RuvC(2) complex forms which resolves the HJ.

It localises to the cytoplasm. The enzyme catalyses ATP + H2O = ADP + phosphate + H(+). Its function is as follows. The RuvA-RuvB-RuvC complex processes Holliday junction (HJ) DNA during genetic recombination and DNA repair, while the RuvA-RuvB complex plays an important role in the rescue of blocked DNA replication forks via replication fork reversal (RFR). RuvA specifically binds to HJ cruciform DNA, conferring on it an open structure. The RuvB hexamer acts as an ATP-dependent pump, pulling dsDNA into and through the RuvAB complex. RuvB forms 2 homohexamers on either side of HJ DNA bound by 1 or 2 RuvA tetramers; 4 subunits per hexamer contact DNA at a time. Coordinated motions by a converter formed by DNA-disengaged RuvB subunits stimulates ATP hydrolysis and nucleotide exchange. Immobilization of the converter enables RuvB to convert the ATP-contained energy into a lever motion, pulling 2 nucleotides of DNA out of the RuvA tetramer per ATP hydrolyzed, thus driving DNA branch migration. The RuvB motors rotate together with the DNA substrate, which together with the progressing nucleotide cycle form the mechanistic basis for DNA recombination by continuous HJ branch migration. Branch migration allows RuvC to scan DNA until it finds its consensus sequence, where it cleaves and resolves cruciform DNA. The sequence is that of Holliday junction branch migration complex subunit RuvB from Wolbachia sp. subsp. Drosophila simulans (strain wRi).